The sequence spans 485 residues: NADH-quinone oxidoreductase subunit N (485 aa).

14 helical membrane passes run 8–28 (LIAL…MLSI), 35–55 (FLNA…LWFV), 71–91 (GFAM…CTFA), 105–125 (FYLL…ANHL), 127–147 (ALFL…GYAF), 159–179 (YTIL…LVYA), 203–223 (LLAG…LVPF), 235–255 (PAPV…GVVM), 271–291 (VVLG…ALSQ), 297–317 (LLGY…IALQ), 326–346 (VGVY…VVSL), 373–393 (AAVM…LGFI), 408–430 (WWLV…RVAV), and 455–475 (IVVL…QPLI).

This sequence belongs to the complex I subunit 2 family. As to quaternary structure, NDH-1 is composed of 13 different subunits. Subunits NuoA, H, J, K, L, M, N constitute the membrane sector of the complex.

The protein resides in the cell inner membrane. It carries out the reaction a quinone + NADH + 5 H(+)(in) = a quinol + NAD(+) + 4 H(+)(out). NDH-1 shuttles electrons from NADH, via FMN and iron-sulfur (Fe-S) centers, to quinones in the respiratory chain. The immediate electron acceptor for the enzyme in this species is believed to be ubiquinone. Couples the redox reaction to proton translocation (for every two electrons transferred, four hydrogen ions are translocated across the cytoplasmic membrane), and thus conserves the redox energy in a proton gradient. The polypeptide is NADH-quinone oxidoreductase subunit N (Salmonella gallinarum (strain 287/91 / NCTC 13346)).